The chain runs to 158 residues: Cystin-1 (158 aa).

A disordered region spans residues 1–146 (MGSGSSRSSR…AAISYDHSEE (146 aa)). Residue Gly2 is the site of N-myristoyl glycine attachment. Low complexity-rich tracts occupy residues 19–32 (ESLP…ALEG) and 39–52 (PVAA…AAEE). The Ciliary targeting motif motif lies at 29–33 (ALEGG). Positions 65–75 (DGRDETLRLLD) are enriched in basic and acidic residues.

In terms of assembly, interacts (when myristoylated) with UNC119 and UNC119B; interaction is required for localization to cilium. In terms of tissue distribution, expressed at high levels in the kidney and pancreas. Moderate expression seen in the skeletal muscle, liver and heart. A weak expression seen in the brain, lung, uterus, prostate, testis, small intestine and colon.

The protein localises to the cell projection. It is found in the cilium membrane. Its subcellular location is the cytoplasm. The protein resides in the cytoskeleton. It localises to the cilium axoneme. The polypeptide is Cystin-1 (CYS1) (Homo sapiens (Human)).